Here is an 89-residue protein sequence, read N- to C-terminus: UPF0237 protein DIP1286 (89 aa).

In terms of domain architecture, ACT spans 4-78; the sequence is IISVTGADHT…KDQNLVIRIQ (75 aa).

The protein belongs to the UPF0237 family.

In Corynebacterium diphtheriae (strain ATCC 700971 / NCTC 13129 / Biotype gravis), this protein is UPF0237 protein DIP1286.